The primary structure comprises 461 residues: Bifunctional protein GlmU (461 aa).

Positions Met-1–Arg-229 are pyrophosphorylase. UDP-N-acetyl-alpha-D-glucosamine-binding positions include Leu-8–Gly-11, Lys-22, Gln-72, and Gly-77–Thr-78. Residue Asp-102 participates in Mg(2+) binding. Residues Gly-139, Glu-154, Asn-169, and Asn-227 each coordinate UDP-N-acetyl-alpha-D-glucosamine. Residue Asn-227 participates in Mg(2+) binding. The tract at residues Ile-230 to Asn-250 is linker. The tract at residues Gly-251–Glu-461 is N-acetyltransferase. Residues Arg-332 and Lys-350 each coordinate UDP-N-acetyl-alpha-D-glucosamine. His-362 serves as the catalytic Proton acceptor. Positions 365 and 376 each coordinate UDP-N-acetyl-alpha-D-glucosamine. Residues Asn-385–Tyr-386, Ala-422, and Arg-439 contribute to the acetyl-CoA site.

This sequence in the N-terminal section; belongs to the N-acetylglucosamine-1-phosphate uridyltransferase family. In the C-terminal section; belongs to the transferase hexapeptide repeat family. As to quaternary structure, homotrimer. Requires Mg(2+) as cofactor.

It is found in the cytoplasm. The catalysed reaction is alpha-D-glucosamine 1-phosphate + acetyl-CoA = N-acetyl-alpha-D-glucosamine 1-phosphate + CoA + H(+). The enzyme catalyses N-acetyl-alpha-D-glucosamine 1-phosphate + UTP + H(+) = UDP-N-acetyl-alpha-D-glucosamine + diphosphate. It participates in nucleotide-sugar biosynthesis; UDP-N-acetyl-alpha-D-glucosamine biosynthesis; N-acetyl-alpha-D-glucosamine 1-phosphate from alpha-D-glucosamine 6-phosphate (route II): step 2/2. The protein operates within nucleotide-sugar biosynthesis; UDP-N-acetyl-alpha-D-glucosamine biosynthesis; UDP-N-acetyl-alpha-D-glucosamine from N-acetyl-alpha-D-glucosamine 1-phosphate: step 1/1. Its pathway is bacterial outer membrane biogenesis; LPS lipid A biosynthesis. Catalyzes the last two sequential reactions in the de novo biosynthetic pathway for UDP-N-acetylglucosamine (UDP-GlcNAc). The C-terminal domain catalyzes the transfer of acetyl group from acetyl coenzyme A to glucosamine-1-phosphate (GlcN-1-P) to produce N-acetylglucosamine-1-phosphate (GlcNAc-1-P), which is converted into UDP-GlcNAc by the transfer of uridine 5-monophosphate (from uridine 5-triphosphate), a reaction catalyzed by the N-terminal domain. This is Bifunctional protein GlmU from Lactobacillus gasseri (strain ATCC 33323 / DSM 20243 / BCRC 14619 / CIP 102991 / JCM 1131 / KCTC 3163 / NCIMB 11718 / NCTC 13722 / AM63).